A 425-amino-acid chain; its full sequence is Serine--tRNA ligase (425 aa).

An L-serine-binding site is contributed by 231–233 (TAE). An ATP-binding site is contributed by 262–264 (RSE). Residue Glu285 participates in L-serine binding. Position 349 to 352 (349 to 352 (EISS)) interacts with ATP. Residue Ser385 coordinates L-serine.

The protein belongs to the class-II aminoacyl-tRNA synthetase family. Type-1 seryl-tRNA synthetase subfamily. As to quaternary structure, homodimer. The tRNA molecule binds across the dimer.

It is found in the cytoplasm. The catalysed reaction is tRNA(Ser) + L-serine + ATP = L-seryl-tRNA(Ser) + AMP + diphosphate + H(+). The enzyme catalyses tRNA(Sec) + L-serine + ATP = L-seryl-tRNA(Sec) + AMP + diphosphate + H(+). It functions in the pathway aminoacyl-tRNA biosynthesis; selenocysteinyl-tRNA(Sec) biosynthesis; L-seryl-tRNA(Sec) from L-serine and tRNA(Sec): step 1/1. Its function is as follows. Catalyzes the attachment of serine to tRNA(Ser). Is also able to aminoacylate tRNA(Sec) with serine, to form the misacylated tRNA L-seryl-tRNA(Sec), which will be further converted into selenocysteinyl-tRNA(Sec). This Bacillus velezensis (strain DSM 23117 / BGSC 10A6 / LMG 26770 / FZB42) (Bacillus amyloliquefaciens subsp. plantarum) protein is Serine--tRNA ligase.